A 599-amino-acid polypeptide reads, in one-letter code: Dictomallein-2 (599 aa).

A signal peptide spans Met1–Cys20. One can recognise a Peptidase M66 domain in the interval Pro145–Tyr407. His298 contacts Zn(2+). Glu299 is a catalytic residue. Zn(2+)-binding residues include His302 and His308.

This sequence belongs to the dictomallein family. Zn(2+) is required as a cofactor.

Its subcellular location is the secreted. The sequence is that of Dictomallein-2 (dtmlB) from Dictyostelium discoideum (Social amoeba).